The following is an 866-amino-acid chain: Protein translocase subunit SecA (866 aa).

Residues Gln87, 105–109 (GEGKT), and Asp514 each bind ATP. The interval 819–858 (VSPIGTPSSEGGGETSGADTYSNKKIGRNDPCPCGSGKKY) is disordered. Residues Cys850, Cys852, Cys861, and Cys862 each contribute to the Zn(2+) site.

Belongs to the SecA family. As to quaternary structure, monomer and homodimer. Part of the essential Sec protein translocation apparatus which comprises SecA, SecYEG and auxiliary proteins SecDF. Other proteins may also be involved. Zn(2+) is required as a cofactor.

Its subcellular location is the cell inner membrane. It is found in the cytoplasm. It carries out the reaction ATP + H2O + cellular proteinSide 1 = ADP + phosphate + cellular proteinSide 2.. Part of the Sec protein translocase complex. Interacts with the SecYEG preprotein conducting channel. Has a central role in coupling the hydrolysis of ATP to the transfer of proteins into and across the cell membrane, serving as an ATP-driven molecular motor driving the stepwise translocation of polypeptide chains across the membrane. The chain is Protein translocase subunit SecA from Elusimicrobium minutum (strain Pei191).